The chain runs to 334 residues: L-lactate dehydrogenase B-A chain (334 aa).

NAD(+) contacts are provided by residues 30 to 58 (GQVG…VEDR) and Arg-100. The substrate site is built by Arg-107, Asn-139, and Arg-170. Residue Asn-139 participates in NAD(+) binding. Catalysis depends on His-194, which acts as the Proton acceptor. Thr-249 provides a ligand contact to substrate.

Belongs to the LDH/MDH superfamily. LDH family. As to quaternary structure, homotetramer.

The protein resides in the cytoplasm. It catalyses the reaction (S)-lactate + NAD(+) = pyruvate + NADH + H(+). It participates in fermentation; pyruvate fermentation to lactate; (S)-lactate from pyruvate: step 1/1. This is L-lactate dehydrogenase B-A chain (ldhba) from Danio rerio (Zebrafish).